A 496-amino-acid chain; its full sequence is tRNA-2-methylthio-N(6)-dimethylallyladenosine synthase (496 aa).

One can recognise an MTTase N-terminal domain in the interval 10-126 (RTYEVRTYGC…LPALLERARV (117 aa)). [4Fe-4S] cluster contacts are provided by Cys-19, Cys-55, Cys-89, Cys-163, Cys-167, and Cys-170. One can recognise a Radical SAM core domain in the interval 149-380 (RESAYAAWVS…ALVNEIAWEE (232 aa)). Positions 382-451 (KRLVGRRVEL…PHHLVADGPV (70 aa)) constitute a TRAM domain. A disordered region spans residues 465 to 496 (ARNAAPAPSSGVTLGMPTVGAPAPLPDAPACR). Residues 487–496 (APLPDAPACR) show a composition bias toward pro residues.

It belongs to the methylthiotransferase family. MiaB subfamily. In terms of assembly, monomer. The cofactor is [4Fe-4S] cluster.

It localises to the cytoplasm. The catalysed reaction is N(6)-dimethylallyladenosine(37) in tRNA + (sulfur carrier)-SH + AH2 + 2 S-adenosyl-L-methionine = 2-methylsulfanyl-N(6)-dimethylallyladenosine(37) in tRNA + (sulfur carrier)-H + 5'-deoxyadenosine + L-methionine + A + S-adenosyl-L-homocysteine + 2 H(+). Catalyzes the methylthiolation of N6-(dimethylallyl)adenosine (i(6)A), leading to the formation of 2-methylthio-N6-(dimethylallyl)adenosine (ms(2)i(6)A) at position 37 in tRNAs that read codons beginning with uridine. In Nocardioides sp. (strain ATCC BAA-499 / JS614), this protein is tRNA-2-methylthio-N(6)-dimethylallyladenosine synthase.